A 339-amino-acid chain; its full sequence is 3-isopropylmalate dehydrogenase (339 aa).

Substrate is bound by residues R88, R98, R122, and D212. Mg(2+)-binding residues include D212, D236, and D240. 272–284 is an NAD(+) binding site; sequence GSAPDIAGKGIAD.

This sequence belongs to the isocitrate and isopropylmalate dehydrogenases family. LeuB type 2 subfamily. In terms of assembly, homodimer. The cofactor is Mg(2+). Mn(2+) serves as cofactor.

Its subcellular location is the cytoplasm. It carries out the reaction (2R,3S)-3-isopropylmalate + NAD(+) = 4-methyl-2-oxopentanoate + CO2 + NADH. The protein operates within amino-acid biosynthesis; L-leucine biosynthesis; L-leucine from 3-methyl-2-oxobutanoate: step 3/4. In terms of biological role, catalyzes the oxidation of 3-carboxy-2-hydroxy-4-methylpentanoate (3-isopropylmalate) to 3-carboxy-4-methyl-2-oxopentanoate. The product decarboxylates to 4-methyl-2 oxopentanoate. The protein is 3-isopropylmalate dehydrogenase of Corynebacterium aurimucosum (strain ATCC 700975 / DSM 44827 / CIP 107346 / CN-1) (Corynebacterium nigricans).